The sequence spans 280 residues: Fructose-1,6-bisphosphatase class 1 (280 aa).

Glu-64, Asp-83, Leu-85, and Asp-86 together coordinate Mg(2+). Residues Asp-86–Ser-89, Tyr-190, and Lys-221 each bind substrate. Glu-227 provides a ligand contact to Mg(2+).

The protein belongs to the FBPase class 1 family. Homotetramer. Mg(2+) is required as a cofactor.

It localises to the cytoplasm. The enzyme catalyses beta-D-fructose 1,6-bisphosphate + H2O = beta-D-fructose 6-phosphate + phosphate. It functions in the pathway carbohydrate biosynthesis; gluconeogenesis. The sequence is that of Fructose-1,6-bisphosphatase class 1 from Campylobacter hominis (strain ATCC BAA-381 / DSM 21671 / CCUG 45161 / LMG 19568 / NCTC 13146 / CH001A).